The chain runs to 319 residues: ATP-dependent 6-phosphofructokinase (319 aa).

Residue glycine 11 coordinates ATP. Position 21 to 25 (21 to 25 (RAVVR)) interacts with ADP. Residues 72-73 (RC) and 102-105 (GDGS) contribute to the ATP site. Position 103 (aspartate 103) interacts with Mg(2+). 125–127 (TID) contributes to the substrate binding site. The active-site Proton acceptor is the aspartate 127. Arginine 154 serves as a coordination point for ADP. 169 to 171 (MGR) lines the substrate pocket. ADP-binding positions include 185–187 (GAE), arginine 211, and 213–215 (KKH). Substrate is bound by residues glutamate 222, arginine 243, and 249-252 (HIQR).

Belongs to the phosphofructokinase type A (PFKA) family. ATP-dependent PFK group I subfamily. Prokaryotic clade 'B1' sub-subfamily. As to quaternary structure, homotetramer. It depends on Mg(2+) as a cofactor.

The protein resides in the cytoplasm. The catalysed reaction is beta-D-fructose 6-phosphate + ATP = beta-D-fructose 1,6-bisphosphate + ADP + H(+). It participates in carbohydrate degradation; glycolysis; D-glyceraldehyde 3-phosphate and glycerone phosphate from D-glucose: step 3/4. With respect to regulation, allosterically activated by ADP and other diphosphonucleosides, and allosterically inhibited by phosphoenolpyruvate. Catalyzes the phosphorylation of D-fructose 6-phosphate to fructose 1,6-bisphosphate by ATP, the first committing step of glycolysis. This Lysinibacillus sphaericus (Bacillus sphaericus) protein is ATP-dependent 6-phosphofructokinase.